The chain runs to 343 residues: 2-alkenal reductase (NADP(+)-dependent) (343 aa).

2 residues coordinate substrate: Tyr-55 and Tyr-80. Residues Ala-165–Val-166, Gly-186, Lys-190, Tyr-206, Asn-230, Cys-252, Tyr-258, Phe-282–Val-284, and Asn-332 contribute to the NADP(+) site.

This sequence belongs to the NADP-dependent oxidoreductase L4BD family. As to quaternary structure, homodimer.

It catalyses the reaction an n-alkanal + NADP(+) = an alk-2-enal + NADPH + H(+). Functionally, reduces the C=C double bonds of alpha, beta unsaturated enones, but has no activity on enones with an endocyclic C=C double-bond. Shows a high specificity for NADPH as the hybrid donor. Substrates are 1-nitrocyclohexene, 2-methylpentenal, trans-cinnamaldehyde, methyl-trans-2-methylcinnamaldehyde, trans-2-nonenal and 1-octen-3-one. Reduced activity with aplha-methyl transcinnamaldehyde, 1-cyclohexene-1-carboxaldehyde, methyl crotonate, (R)-pulegone, and dimethyl itaconate and no activity with maleimides, citral, (5R)- or (5S)-carvone, (S)-perillyl alcohol, and substituted cyclohexenones and cyclopentenones. May also act as a allyl-alcohol dehydrogenase by catalyzing the dehydrogenation of secondary allylic alcohols rather than saturated secondary alcohols. Allyl-alcohol dehydrogenase is specific for the S-stereoisomer of the alcohols. The polypeptide is 2-alkenal reductase (NADP(+)-dependent) (DBR) (Nicotiana tabacum (Common tobacco)).